The sequence spans 47 residues: Photosystem II reaction center protein K (47 aa).

A propeptide spanning residues 1–10 is cleaved from the precursor; that stretch reads MAAFSLDLLA. Residues 19–39 traverse the membrane as a helical segment; sequence FGPLIDILPIIPVFFLLLAFV.

Belongs to the PsbK family. PSII is composed of 1 copy each of membrane proteins PsbA, PsbB, PsbC, PsbD, PsbE, PsbF, PsbH, PsbI, PsbJ, PsbK, PsbL, PsbM, PsbT, PsbX, PsbY, PsbZ, Psb30/Ycf12, peripheral proteins PsbO, CyanoQ (PsbQ), PsbU, PsbV and a large number of cofactors. It forms dimeric complexes.

It is found in the cellular thylakoid membrane. One of the components of the core complex of photosystem II (PSII). PSII is a light-driven water:plastoquinone oxidoreductase that uses light energy to abstract electrons from H(2)O, generating O(2) and a proton gradient subsequently used for ATP formation. It consists of a core antenna complex that captures photons, and an electron transfer chain that converts photonic excitation into a charge separation. The sequence is that of Photosystem II reaction center protein K from Synechococcus sp. (strain WH7803).